The chain runs to 329 residues: Acetyl-coenzyme A carboxylase carboxyl transferase subunit alpha (329 aa).

The 255-residue stretch at 40–294 folds into the CoA carboxyltransferase C-terminal domain; sequence QLETLAARRR…KESLIRNLRE (255 aa).

This sequence belongs to the AccA family. As to quaternary structure, acetyl-CoA carboxylase is a heterohexamer composed of biotin carboxyl carrier protein (AccB), biotin carboxylase (AccC) and two subunits each of ACCase subunit alpha (AccA) and ACCase subunit beta (AccD).

It localises to the cytoplasm. The enzyme catalyses N(6)-carboxybiotinyl-L-lysyl-[protein] + acetyl-CoA = N(6)-biotinyl-L-lysyl-[protein] + malonyl-CoA. It participates in lipid metabolism; malonyl-CoA biosynthesis; malonyl-CoA from acetyl-CoA: step 1/1. Component of the acetyl coenzyme A carboxylase (ACC) complex. First, biotin carboxylase catalyzes the carboxylation of biotin on its carrier protein (BCCP) and then the CO(2) group is transferred by the carboxyltransferase to acetyl-CoA to form malonyl-CoA. This Prochlorococcus marinus (strain MIT 9211) protein is Acetyl-coenzyme A carboxylase carboxyl transferase subunit alpha.